A 222-amino-acid chain; its full sequence is MAIIMTESSYERRVKALYEKQIRMEALEAKFIKKVYKFNSNLWDVKEAACRHQRKVGKLQKVIMERREELDKRVSFIEELDRELEATKLRSLAMKDRIKQQKMLARQRKNEIMESIHTLSKTTGTYINQEALPARVKGVTVLRGDKRNQLIPFDLKSTDVEGLDSLCQHLESLNVDMAQWQQLISLAMDVAMESRAPTTPPKEAANCNSIIEIDLTSPTCHI.

Residues 51-100 adopt a coiled-coil conformation; it reads RHQRKVGKLQKVIMERREELDKRVSFIEELDRELEATKLRSLAMKDRIKQ.

It belongs to the SPC25 family. As to quaternary structure, component of the Ndc80 complex, which is composed of Ndc80, Nuf2 and Spc25.

The protein localises to the nucleus. Its subcellular location is the chromosome. It is found in the centromere. The protein resides in the kinetochore. In terms of biological role, acts as a component of the essential kinetochore-associated Ndc80 complex, which is required for chromosome segregation and spindle checkpoint activity during meiosis and mitosis. Required for kinetochore integrity and the organization of stable microtubule binding sites in the outer plate of the kinetochore. Participates in SAC signaling that responds specifically to disruptions in spindle microtubule dynamics. The NDC80 complex synergistically enhances the affinity of the SKA1 complex for microtubules and may allow the NDC80 complex to track depolymerizing microtubules. This chain is Kinetochore protein Spc25, found in Drosophila sechellia (Fruit fly).